We begin with the raw amino-acid sequence, 42 residues long: Photosystem II reaction center protein J (42 aa).

Residues 10 to 30 form a helical membrane-spanning segment; the sequence is IPLWLVGTVAGTAALTLVAVF.

The protein belongs to the PsbJ family. As to quaternary structure, PSII is composed of 1 copy each of membrane proteins PsbA, PsbB, PsbC, PsbD, PsbE, PsbF, PsbH, PsbI, PsbJ, PsbK, PsbL, PsbM, PsbT, PsbX, PsbY, PsbZ, Psb30/Ycf12, at least 3 peripheral proteins of the oxygen-evolving complex and a large number of cofactors. It forms dimeric complexes.

It localises to the plastid. The protein resides in the chloroplast thylakoid membrane. Functionally, one of the components of the core complex of photosystem II (PSII). PSII is a light-driven water:plastoquinone oxidoreductase that uses light energy to abstract electrons from H(2)O, generating O(2) and a proton gradient subsequently used for ATP formation. It consists of a core antenna complex that captures photons, and an electron transfer chain that converts photonic excitation into a charge separation. The chain is Photosystem II reaction center protein J from Chlorella vulgaris (Green alga).